Consider the following 493-residue polypeptide: Cytochrome P450 2E1 (493 aa).

298–303 (FAGTET) lines the substrate pocket. Residue Cys-437 coordinates heme.

This sequence belongs to the cytochrome P450 family. In terms of assembly, interacts with chaperones HSP70 and HSP90; this interaction is required for initial targeting to mitochondria. Heme is required as a cofactor.

It localises to the endoplasmic reticulum membrane. The protein resides in the microsome membrane. Its subcellular location is the mitochondrion inner membrane. The catalysed reaction is an organic molecule + reduced [NADPH--hemoprotein reductase] + O2 = an alcohol + oxidized [NADPH--hemoprotein reductase] + H2O + H(+). The enzyme catalyses (5Z,8Z,11Z)-eicosatrienoate + reduced [NADPH--hemoprotein reductase] + O2 = 19-hydroxy-(5Z,8Z,11Z)-eicosatrienoate + oxidized [NADPH--hemoprotein reductase] + H2O + H(+). It carries out the reaction (5Z,8Z,11Z,14Z,17Z)-eicosapentaenoate + reduced [NADPH--hemoprotein reductase] + O2 = 19-hydroxy-(5Z,8Z,11Z,14Z,17Z)-eicosapentaenoate + oxidized [NADPH--hemoprotein reductase] + H2O + H(+). It catalyses the reaction (4Z,7Z,10Z,13Z,16Z,19Z)-docosahexaenoate + reduced [NADPH--hemoprotein reductase] + O2 = 21-hydroxy-(4Z,7Z,10Z,13Z,16Z,19Z)-docosahexaenoate + oxidized [NADPH--hemoprotein reductase] + H2O + H(+). The catalysed reaction is dodecanoate + reduced [NADPH--hemoprotein reductase] + O2 = 11-hydroxydodecanoate + oxidized [NADPH--hemoprotein reductase] + H2O + H(+). The enzyme catalyses tetradecanoate + reduced [NADPH--hemoprotein reductase] + O2 = 13-hydroxytetradecanoate + oxidized [NADPH--hemoprotein reductase] + H2O + H(+). It carries out the reaction 4-nitrophenol + NADPH + O2 + H(+) = 4-nitrocatechol + NADP(+) + H2O. Its pathway is lipid metabolism; fatty acid metabolism. Its activity is regulated as follows. The omega-1 hydroxylase activity is stimulated by cytochrome b5. Its function is as follows. A cytochrome P450 monooxygenase involved in the metabolism of fatty acids. Mechanistically, uses molecular oxygen inserting one oxygen atom into a substrate, and reducing the second into a water molecule, with two electrons provided by NADPH via cytochrome P450 reductase (NADPH--hemoprotein reductase). Catalyzes the hydroxylation of carbon-hydrogen bonds. Hydroxylates fatty acids specifically at the omega-1 position displaying the highest catalytic activity for saturated fatty acids. May be involved in the oxidative metabolism of xenobiotics. This is Cytochrome P450 2E1 from Homo sapiens (Human).